A 96-amino-acid polypeptide reads, in one-letter code: Large ribosomal subunit protein eL21 (96 aa).

Positions 1 to 66 (MPSSNGPLEG…FDGQTGTVEG (66 aa)) are disordered.

Belongs to the eukaryotic ribosomal protein eL21 family. In terms of assembly, part of the 50S ribosomal subunit. Interacts with protein L18 and binds the 5S rRNA. Has been cross-linked to L18.

Its function is as follows. This is one of 5 proteins that mediate the attachment of the 5S rRNA onto the large ribosomal subunit, stabilizing the orientation of adjacent RNA domains. This Haloarcula marismortui (strain ATCC 43049 / DSM 3752 / JCM 8966 / VKM B-1809) (Halobacterium marismortui) protein is Large ribosomal subunit protein eL21 (rpl21e).